Here is an 80-residue protein sequence, read N- to C-terminus: MGRRRVKRRINIPKRQSRLEKRFNCPVCNHENVVQCTVKKTLMKGFANCSVCEASFACDANKLTTGIDVYSAWVDECCKR.

Residues Cys-25, Cys-28, Cys-49, and Cys-52 each coordinate Zn(2+).

This sequence belongs to the ELOF1 family.

It is found in the nucleus. Its function is as follows. Transcription elongation factor implicated in the maintenance of proper chromatin structure in actively transcribed regions. This is Transcription elongation factor 1 homolog from Encephalitozoon cuniculi (strain GB-M1) (Microsporidian parasite).